Consider the following 44-residue polypeptide: Cytochrome b559 subunit beta (44 aa).

Residues 19 to 35 (WLSIHALAVPTIFFLGS) form a helical membrane-spanning segment. Heme is bound at residue His-23.

Belongs to the PsbE/PsbF family. As to quaternary structure, heterodimer of an alpha subunit and a beta subunit. PSII is composed of 1 copy each of membrane proteins PsbA, PsbB, PsbC, PsbD, PsbE, PsbF, PsbH, PsbI, PsbJ, PsbK, PsbL, PsbM, PsbT, PsbX, PsbY, PsbZ, Psb30/Ycf12, at least 3 peripheral proteins of the oxygen-evolving complex and a large number of cofactors. It forms dimeric complexes. Heme b is required as a cofactor.

The protein resides in the plastid. It is found in the chloroplast thylakoid membrane. In terms of biological role, this b-type cytochrome is tightly associated with the reaction center of photosystem II (PSII). PSII is a light-driven water:plastoquinone oxidoreductase that uses light energy to abstract electrons from H(2)O, generating O(2) and a proton gradient subsequently used for ATP formation. It consists of a core antenna complex that captures photons, and an electron transfer chain that converts photonic excitation into a charge separation. This Tetradesmus obliquus (Green alga) protein is Cytochrome b559 subunit beta.